The sequence spans 523 residues: MVHWADYMAEKIIKERGEKEEYVVESGITPSGYVHVGNFRELFTAYIVGHALRDRGYNVRHIHMWDDYDRFRKVPKNVPQEWEEYLGMPVSEVPDPWGCHDSYAEHFMGLFEEEVAKLEMDVEFLRASELYKKGEYAEEIRKAFEAKGKIMAILNKYREVAKQPPLPENWWPAMVYCPEHRKESEIIDWDGEWGVKYRCPEGHEGWTDIRDGNVKLRWRVDWPMRWAHFGVDFEPAGKDHLAAGSSYDTGKEIIREVYGKEAPLTLMYEFVGIKGQKGKMSGSKGNVILLSDLYEVLEPGLVRFIYAKHRPNKEIRIDLGLGLLNLYDEFDRVERIYFGIEKGKGDEEELKRTYELSVPKKPKRLVAQAPFRFLAVLVQLPHLSIEDIIFTLVKQGHVPENLTQEDIDRIKLRIKLAKNWVEKYAPEEVKFKILSVPGVSEVDPTIREAMLEVAEWLESHEDFAVDELNNILFEVAKKRNIPSKVWFSTLYKLFIGKDRGPKLANFLAALDREFVVRRLRLEG.

The 'HIGH' region motif lies at 30–38 (PSGYVHVGN). 8 residues coordinate Zn(2+): D95, C99, H100, H106, C177, H180, C199, and H203. The short motif at 279–283 (KMSGS) is the 'KMSKS' region element.

This sequence belongs to the class-I aminoacyl-tRNA synthetase family. Requires Zn(2+) as cofactor.

The protein resides in the cytoplasm. It catalyses the reaction tRNA(Lys) + L-lysine + ATP = L-lysyl-tRNA(Lys) + AMP + diphosphate. The protein is Lysine--tRNA ligase (lysS) of Pyrococcus furiosus (strain ATCC 43587 / DSM 3638 / JCM 8422 / Vc1).